Reading from the N-terminus, the 204-residue chain is Thymidylate kinase (204 aa).

It belongs to the thymidylate kinase family. Homodimer; the dimer arrangement is orthogonal and not antiparallel as in human enzyme.

The catalysed reaction is dTMP + ATP = dTDP + ADP. The protein operates within pyrimidine metabolism; dTTP biosynthesis. Poxvirus TMP kinase is able to phosphorylate dTMP, dUMP and also dGMP from any purine and pyrimidine nucleoside triphosphate. The large substrate specificity is explained by the presence of a canal connecting the edge of the dimer interface to the TMP base binding pocket, canal not found in the human homolog. The protein is Thymidylate kinase (OPG178) of Cynomys gunnisoni (Gunnison's prairie dog).